The sequence spans 186 residues: MKGSSEHGETSKAAPLGRGGVSKGVSVLDLILRFIAIIGTLASAIAMGTTNETLPFFTQFIRFKAQYSDLPTLTFFVVANSIVCAYLILSLPLSIVHIIRSRAKYSRLLLIFLDAAMLALVTAGASAAAAIVYLAHKGNVRANWLAICQQFDSFCERISGSLIGSFGAMVMLILLILLSAIALARR.

Residues 1-26 are Cytoplasmic-facing; that stretch reads MKGSSEHGETSKAAPLGRGGVSKGVS. A helical membrane pass occupies residues 27 to 47; that stretch reads VLDLILRFIAIIGTLASAIAM. Residues 48-74 lie on the Extracellular side of the membrane; that stretch reads GTTNETLPFFTQFIRFKAQYSDLPTLT. A glycan (N-linked (GlcNAc...) asparagine) is linked at Asn51. A helical membrane pass occupies residues 75 to 95; that stretch reads FFVVANSIVCAYLILSLPLSI. At 96–107 the chain is on the cytoplasmic side; sequence VHIIRSRAKYSR. The chain crosses the membrane as a helical span at residues 108 to 128; sequence LLLIFLDAAMLALVTAGASAA. At 129 to 161 the chain is on the extracellular side; the sequence is AAIVYLAHKGNVRANWLAICQQFDSFCERISGS. The helical transmembrane segment at 162–182 threads the bilayer; that stretch reads LIGSFGAMVMLILLILLSAIA. The Cytoplasmic portion of the chain corresponds to 183–186; that stretch reads LARR.

This sequence belongs to the Casparian strip membrane proteins (CASP) family. As to quaternary structure, homodimer and heterodimers.

It is found in the cell membrane. In terms of biological role, regulates membrane-cell wall junctions and localized cell wall deposition. Required for establishment of the Casparian strip membrane domain (CSD) and the subsequent formation of Casparian strips, a cell wall modification of the root endodermis that determines an apoplastic barrier between the intraorganismal apoplasm and the extraorganismal apoplasm and prevents lateral diffusion. This is Casparian strip membrane protein 3 from Sorghum bicolor (Sorghum).